A 943-amino-acid polypeptide reads, in one-letter code: Isoleucine--tRNA ligase (943 aa).

The 'HIGH' region signature appears at 58 to 68 (PYANGSIHIGH). Position 567 (E567) interacts with L-isoleucyl-5'-AMP. The 'KMSKS' region signature appears at 608 to 612 (KMSKS). K611 provides a ligand contact to ATP. C906, C909, C926, and C929 together coordinate Zn(2+).

The protein belongs to the class-I aminoacyl-tRNA synthetase family. IleS type 1 subfamily. As to quaternary structure, monomer. Zn(2+) serves as cofactor.

It localises to the cytoplasm. It carries out the reaction tRNA(Ile) + L-isoleucine + ATP = L-isoleucyl-tRNA(Ile) + AMP + diphosphate. Functionally, catalyzes the attachment of isoleucine to tRNA(Ile). As IleRS can inadvertently accommodate and process structurally similar amino acids such as valine, to avoid such errors it has two additional distinct tRNA(Ile)-dependent editing activities. One activity is designated as 'pretransfer' editing and involves the hydrolysis of activated Val-AMP. The other activity is designated 'posttransfer' editing and involves deacylation of mischarged Val-tRNA(Ile). The polypeptide is Isoleucine--tRNA ligase (Ectopseudomonas mendocina (strain ymp) (Pseudomonas mendocina)).